We begin with the raw amino-acid sequence, 1135 residues long: Receptor-type guanylate cyclase gcy-4 (1135 aa).

The N-terminal stretch at 1–20 (MTQLLRFLLILSIFCDFSHS) is a signal peptide. Residues 21–483 (QRPTIRVGIA…CPIPFFDQYR (463 aa)) are Extracellular-facing. Residues N37, N193, N209, N251, N349, N375, N431, N436, and N447 are each glycosylated (N-linked (GlcNAc...) asparagine). A helical transmembrane segment spans residues 484 to 504 (LLIFVFVIVAGLLILAIFTCL). At 505 to 1135 (TSMVRNQRAE…VMRREMMRVS (631 aa)) the chain is on the cytoplasmic side. The segment at 535 to 560 (KGRRLSTDSENSTVTKSSKGSSSKNF) is disordered. Residues 545-837 (NSTVTKSSKG…KDNLMDHVFS (293 aa)) form the Protein kinase domain. Residues 546-560 (STVTKSSKGSSSKNF) show a composition bias toward low complexity. Residues 895-1025 (TVFFSDLVKF…DTVNTASRME (131 aa)) enclose the Guanylate cyclase domain.

This sequence belongs to the adenylyl cyclase class-4/guanylyl cyclase family. In terms of tissue distribution, expressed bilaterally in ASE neurons.

The protein resides in the cell membrane. The catalysed reaction is GTP = 3',5'-cyclic GMP + diphosphate. Guanylate cyclase involved in the production of the second messenger cGMP. Regulates chemotaxis responses toward salt ions in ASE sensory neurons. This Caenorhabditis briggsae protein is Receptor-type guanylate cyclase gcy-4.